The sequence spans 774 residues: Ion-translocating oxidoreductase complex subunit C (774 aa).

4Fe-4S ferredoxin-type domains lie at 368–398 (ELTS…QQLQ) and 408–437 (KCEE…VQYY). Residues Cys-378, Cys-381, Cys-384, Cys-388, Cys-417, Cys-420, Cys-423, and Cys-427 each contribute to the [4Fe-4S] cluster site. Positions 459–490 (ARFEEKKARMERDKAERENRFKQAAEDRRKEM) are enriched in basic and acidic residues. Disordered regions lie at residues 459-496 (ARFE…QGGS) and 533-774 (AKQA…EEKD). Residues 533-545 (AKQAEAAQSGASE) are compositionally biased toward low complexity. A compositionally biased stretch (basic and acidic residues) spans 550–572 (EMAKLREERKRQARERKAQKGEV). Low complexity predominate over residues 605 to 618 (TESAAQPAQATPSS). Composition is skewed to polar residues over residues 645–658 (TEST…TPSS), 686–698 (ESAA…TPSS), 725–738 (TESA…TPSS), and 762–774 (QQSS…EEKD).

This sequence belongs to the 4Fe4S bacterial-type ferredoxin family. RnfC subfamily. In terms of assembly, the complex is composed of six subunits: RnfA, RnfB, RnfC, RnfD, RnfE and RnfG. [4Fe-4S] cluster is required as a cofactor.

Its subcellular location is the cell inner membrane. Functionally, part of a membrane-bound complex that couples electron transfer with translocation of ions across the membrane. The polypeptide is Ion-translocating oxidoreductase complex subunit C (Vibrio cholerae serotype O1 (strain ATCC 39315 / El Tor Inaba N16961)).